The following is a 176-amino-acid chain: Xanthine-guanine phosphoribosyltransferase (176 aa).

5-phospho-alpha-D-ribose 1-diphosphate contacts are provided by residues 51–52, Arg88, and 111–119; these read RG and DDLVDSGKT. GMP is bound at residue Arg88. Asp112 provides a ligand contact to Mg(2+). Residues Asp115 and Ile158 each contribute to the guanine site. 2 residues coordinate xanthine: Asp115 and Ile158. GMP contacts are provided by residues 115–119 and 157–158; these read DSGKT and WI.

Belongs to the purine/pyrimidine phosphoribosyltransferase family. XGPT subfamily. Homotetramer. It depends on Mg(2+) as a cofactor.

The protein localises to the cell inner membrane. The enzyme catalyses GMP + diphosphate = guanine + 5-phospho-alpha-D-ribose 1-diphosphate. It carries out the reaction XMP + diphosphate = xanthine + 5-phospho-alpha-D-ribose 1-diphosphate. It catalyses the reaction IMP + diphosphate = hypoxanthine + 5-phospho-alpha-D-ribose 1-diphosphate. It participates in purine metabolism; GMP biosynthesis via salvage pathway; GMP from guanine: step 1/1. Its pathway is purine metabolism; XMP biosynthesis via salvage pathway; XMP from xanthine: step 1/1. Purine salvage pathway enzyme that catalyzes the transfer of the ribosyl-5-phosphate group from 5-phospho-alpha-D-ribose 1-diphosphate (PRPP) to the N9 position of the 6-oxopurines guanine and xanthine to form the corresponding ribonucleotides GMP (guanosine 5'-monophosphate) and XMP (xanthosine 5'-monophosphate), with the release of PPi. To a lesser extent, also acts on hypoxanthine. This Ruegeria sp. (strain TM1040) (Silicibacter sp.) protein is Xanthine-guanine phosphoribosyltransferase.